A 1218-amino-acid polypeptide reads, in one-letter code: Protein STICHEL (1218 aa).

The interval 24–136 (AGRVLRDPGT…SDARNGGDSY (113 aa)) is disordered. Composition is skewed to polar residues over residues 32–46 (GTTSSWKSPLDSSRS), 54–73 (ASRNGGSSSQFPIRGESSTN), and 86–95 (WKTQKSSSEK). The Bipartite nuclear localization signal signature appears at 163–180 (RKSNVGSCKKKSKKKISS). Short sequence motifs (PEST) lie at residues 273–304 (RNPSTVGSWDGTTTSVNDGDDELDDNLDLPGR) and 425–449 (RSQDGLEAVALDGEEEEGSTPETIR). ATP is bound at residue 490 to 497 (GPRGTGKT). Zn(2+)-binding residues include cysteine 509, cysteine 518, cysteine 521, and cysteine 524. The stretch at 762-788 (EADMEGLKHALKLLSEAEKQLRVSNDR) forms a coiled coil. The disordered stretch occupies residues 802–828 (MPSPGTTHTGSSRRQSSRATDDDPASV). Residues 804 to 819 (SPGTTHTGSSRRQSSR) are compositionally biased toward polar residues. 2 short sequence motifs (bipartite nuclear localization signal) span residues 1178–1195 (RRSKSKQVKGTPVRSRRN) and 1196–1213 (RKSRFSLFNGCAKPRKAE).

It belongs to the DnaX/STICHEL family. As to quaternary structure, interacts with BLT. As to expression, ubiquitous.

The protein localises to the nucleus. In terms of biological role, acts as a key regulator of trichome branching through an endoreduplication-independent pathway. The protein is Protein STICHEL (STI) of Arabidopsis thaliana (Mouse-ear cress).